The sequence spans 257 residues: Global transcriptional regulator CodY (257 aa).

Positions 1–155 (MSLLSKTREL…AATVIGMEIL (155 aa)) are GAF domain. The segment at residues 203–222 (ASKVADGVGITRSVIVNALR) is a DNA-binding region (H-T-H motif).

It belongs to the CodY family.

The protein localises to the cytoplasm. DNA-binding global transcriptional regulator which is involved in the adaptive response to starvation and acts by directly or indirectly controlling the expression of numerous genes in response to nutrient availability. During rapid exponential growth, CodY is highly active and represses genes whose products allow adaptation to nutrient depletion. In Staphylococcus aureus (strain bovine RF122 / ET3-1), this protein is Global transcriptional regulator CodY.